Reading from the N-terminus, the 135-residue chain is ATP synthase epsilon chain (135 aa).

This sequence belongs to the ATPase epsilon chain family. As to quaternary structure, F-type ATPases have 2 components, CF(1) - the catalytic core - and CF(0) - the membrane proton channel. CF(1) has five subunits: alpha(3), beta(3), gamma(1), delta(1), epsilon(1). CF(0) has three main subunits: a, b and c.

It is found in the cellular thylakoid membrane. In terms of biological role, produces ATP from ADP in the presence of a proton gradient across the membrane. In Prochlorococcus marinus (strain NATL1A), this protein is ATP synthase epsilon chain.